Reading from the N-terminus, the 185-residue chain is Probable nicotinate-nucleotide adenylyltransferase (185 aa).

It belongs to the NadD family.

The enzyme catalyses nicotinate beta-D-ribonucleotide + ATP + H(+) = deamido-NAD(+) + diphosphate. It functions in the pathway cofactor biosynthesis; NAD(+) biosynthesis; deamido-NAD(+) from nicotinate D-ribonucleotide: step 1/1. Catalyzes the reversible adenylation of nicotinate mononucleotide (NaMN) to nicotinic acid adenine dinucleotide (NaAD). This Cereibacter sphaeroides (strain ATCC 17025 / ATH 2.4.3) (Rhodobacter sphaeroides) protein is Probable nicotinate-nucleotide adenylyltransferase.